The following is a 142-amino-acid chain: 3-hydroxyacyl-[acyl-carrier-protein] dehydratase FabZ (142 aa).

Residue His48 is part of the active site.

It belongs to the thioester dehydratase family. FabZ subfamily.

Its subcellular location is the cytoplasm. The enzyme catalyses a (3R)-hydroxyacyl-[ACP] = a (2E)-enoyl-[ACP] + H2O. Functionally, involved in unsaturated fatty acids biosynthesis. Catalyzes the dehydration of short chain beta-hydroxyacyl-ACPs and long chain saturated and unsaturated beta-hydroxyacyl-ACPs. The chain is 3-hydroxyacyl-[acyl-carrier-protein] dehydratase FabZ from Anoxybacillus flavithermus (strain DSM 21510 / WK1).